A 757-amino-acid chain; its full sequence is Voltage-gated potassium channel KCNC3 (757 aa).

The tract at residues 1 to 78 (MLSSVCVSSF…CPGLPAAAMG (78 aa)) is important for normal N-type inactivation. Positions 1–87 (MLSSVCVSSF…GRHGGGGGDS (87 aa)) are disordered. The Cytoplasmic segment spans residues 1-290 (MLSSVCVSSF…EDPYSSRAAR (290 aa)). Positions 21-40 (PAPPPQPPESPPPPPLPPQQ) are enriched in pro residues. Low complexity predominate over residues 41–52 (QQPAQPGPAASP). Positions 157, 163, 184, and 185 each coordinate Zn(2+). Low complexity predominate over residues 210–219 (AANAANAAGA). Residues 210–232 (AANAANAAGAHDGGLDDEAGAGG) form a disordered region. The helical transmembrane segment at 291 to 309 (YVAFASLFFILISITTFCL) threads the bilayer. N-linked (GlcNAc...) asparagine glycans are attached at residues N320 and N336. Residues 351–370 (VEGVCVVWFTFEFLMRITFC) form a helical membrane-spanning segment. Over 371 to 379 (PDKVEFLKS) the chain is Cytoplasmic. The chain crosses the membrane as a helical span at residues 380-398 (SLNIIDCVAILPFYLEVGL). Residues 412–434 (FLRVVRFVRILRIFKLTRHFVGL) traverse the membrane as a helical; Voltage-sensor segment. At 435–447 (RVLGHTLRASTNE) the chain is on the cytoplasmic side. Residues 448–469 (FLLLIIFLALGVLIFATMIYYA) form a helical membrane-spanning segment. Residue N483 is glycosylated (N-linked (GlcNAc...) asparagine). K(+) is bound by residues T503, L504, G505, and Y506. The Selectivity filter motif lies at 503–508 (TLGYGD). Residues 518 to 539 (LVGALCALAGVLTIAMPVPVIV) traverse the membrane as a helical segment. Residues 540–757 (NNFGMYYSLA…NANAAAWISP (218 aa)) are Cytoplasmic-facing. Residues 556–613 (PKKKNKHIPRPPQPGSPNYCKPDPPPPPPPHPHHGSGGISPPPPITPPSMGVTVAGAY) are disordered. An Omega-N-methylarginine modification is found at R625. Residues 682–746 (QPAMSPEDKS…KPGPPSFLPD (65 aa)) are disordered. Phosphoserine is present on residues S686 and S691. Positions 728-743 (PPLPPQDWRKPGPPSF) are enriched in pro residues.

It belongs to the potassium channel family. C (Shaw) (TC 1.A.1.2) subfamily. Kv3.3/KCNC3 sub-subfamily. In terms of assembly, homotetramer. Heterotetramer with KCNC1. Interacts (via C-terminus) with HAX1; this interaction modulates channel gating. Identified in a complex with ACTR3, a subunit of the Arp2/3 complex; this interaction is indirect and depends on the presence of HAX1. Post-translationally, N-glycosylated.

The protein localises to the cell membrane. It is found in the presynaptic cell membrane. The protein resides in the perikaryon. It localises to the cell projection. Its subcellular location is the axon. The protein localises to the dendrite. It is found in the dendritic spine membrane. The protein resides in the cytoplasm. It localises to the cell cortex. Its subcellular location is the cytoskeleton. It carries out the reaction K(+)(in) = K(+)(out). In terms of biological role, voltage-gated potassium channel that plays an important role in the rapid repolarization of fast-firing brain neurons. The channel opens in response to the voltage difference across the membrane, forming a potassium-selective channel through which potassium ions pass in accordance with their electrochemical gradient. The channel displays rapid activation and inactivation kinetics. It plays a role in the regulation of the frequency, shape and duration of action potentials in Purkinje cells. Required for normal survival of cerebellar neurons, probably via its role in regulating the duration and frequency of action potentials that in turn regulate the activity of voltage-gated Ca(2+) channels and cellular Ca(2+) homeostasis. Required for normal motor function. Plays a role in the reorganization of the cortical actin cytoskeleton and the formation of actin veil structures in neuronal growth cones via its interaction with HAX1 and the Arp2/3 complex. The polypeptide is Voltage-gated potassium channel KCNC3 (KCNC3) (Homo sapiens (Human)).